Consider the following 504-residue polypeptide: CaM kinase-like vesicle-associated protein (504 aa).

The Protein kinase domain occupies 24-286 (YDLGQVVKTE…AEEAISHEWI (263 aa)). The segment at 378–504 (KSDDMASADR…AQESQRVETS (127 aa)) is disordered. Residue Ser384 is modified to Phosphoserine. Residues 390–431 (TPATDGSATPATDGSVTPATDGSITPATDGSVTPATDRSATP) are compositionally biased toward polar residues. Thr438 and Thr462 each carry phosphothreonine. A compositionally biased stretch (low complexity) spans 445–470 (TVPAAQSSAAPAAKAAATPEPAVAQP).

This sequence belongs to the protein kinase superfamily. CAMK Ser/Thr protein kinase family. In terms of assembly, interacts with calmodulin, in the presence of calcium. The cofactor is Ca(2+). As to expression, expressed in brain and weakly in eye. Not detected in liver, kidney, spleen, thymus, bladder, aorta, lung, intestine, esophagus, stomach, skeletal muscle, heart, diaphragm, uterus, tail skin, submaxillary gland, prostate, ear, epididymis, placenta, pancreas, ovary, testis, adrenal gland, parathyroid gland, thyroid gland, pineal gland, pituitary and sciatic nerve. In adult hippocampus, predominantly expressed in caudate nucleus, cortex, hypothalamus, olfactory bulb, and midbrain and faintly in pons, brainstem and spinal cord.

The protein resides in the cell membrane. The protein localises to the cytoplasmic vesicle membrane. In terms of biological role, has no detectable kinase activity in vitro. In Rattus norvegicus (Rat), this protein is CaM kinase-like vesicle-associated protein (Camkv).